A 538-amino-acid chain; its full sequence is CTP synthase (538 aa).

Residues 1 to 266 (MKTKFIFVTG…DDQVVDKLNI (266 aa)) are amidoligase domain. A CTP-binding site is contributed by serine 14. UTP is bound at residue serine 14. ATP-binding positions include 15 to 20 (SIGKGL) and aspartate 72. Positions 72 and 140 each coordinate Mg(2+). CTP-binding positions include 147-149 (DIE), 187-192 (KTKPTQ), and lysine 223. Residues 187-192 (KTKPTQ) and lysine 223 each bind UTP. Residues 292–534 (HIAIVGKYVN…IAAALEHRGK (243 aa)) enclose the Glutamine amidotransferase type-1 domain. An L-glutamine-binding site is contributed by glycine 354. Catalysis depends on cysteine 381, which acts as the Nucleophile; for glutamine hydrolysis. L-glutamine is bound by residues 382–385 (LGMQ), glutamate 405, and arginine 462. Catalysis depends on residues histidine 507 and glutamate 509.

Belongs to the CTP synthase family. As to quaternary structure, homotetramer.

The enzyme catalyses UTP + L-glutamine + ATP + H2O = CTP + L-glutamate + ADP + phosphate + 2 H(+). It carries out the reaction L-glutamine + H2O = L-glutamate + NH4(+). The catalysed reaction is UTP + NH4(+) + ATP = CTP + ADP + phosphate + 2 H(+). It functions in the pathway pyrimidine metabolism; CTP biosynthesis via de novo pathway; CTP from UDP: step 2/2. Allosterically activated by GTP, when glutamine is the substrate; GTP has no effect on the reaction when ammonia is the substrate. The allosteric effector GTP functions by stabilizing the protein conformation that binds the tetrahedral intermediate(s) formed during glutamine hydrolysis. Inhibited by the product CTP, via allosteric rather than competitive inhibition. Catalyzes the ATP-dependent amination of UTP to CTP with either L-glutamine or ammonia as the source of nitrogen. Regulates intracellular CTP levels through interactions with the four ribonucleotide triphosphates. This Geobacter metallireducens (strain ATCC 53774 / DSM 7210 / GS-15) protein is CTP synthase.